The sequence spans 146 residues: Aminoglycoside N(6')-acetyltransferase type 1 (146 aa).

One can recognise an N-acetyltransferase domain in the interval 1 to 146; sequence MNIMPVSESL…RVVYFKKHIG (146 aa). 4 residues coordinate substrate: tryptophan 22, histidine 25, tyrosine 66, and glutamate 79. Residue 81–83 coordinates acetyl-CoA; it reads IYV. Residue aspartate 115 coordinates substrate. Asparagine 120 lines the acetyl-CoA pocket. A substrate-binding site is contributed by glutamate 136.

Homodimer.

It catalyses the reaction kanamycin B + acetyl-CoA = N(6')-acetylkanamycin B + CoA + H(+). Its function is as follows. Catalyzes the transfer of an acetyl group from acetyl-CoA to the 6'-amino group of aminoglycoside molecules conferring resistance to antibiotics containing the purpurosamine ring including amikacin, kanamycin, tobramycin and netilmicin. The chain is Aminoglycoside N(6')-acetyltransferase type 1 from Acinetobacter genomosp. 13.